The following is a 366-amino-acid chain: Phospho-N-acetylmuramoyl-pentapeptide-transferase (366 aa).

10 helical membrane-spanning segments follow: residues 27 to 47 (AAMF…IASL), 71 to 91 (TPTM…LLWA), 93 to 113 (LSNV…AIGF), 134 to 154 (LAIE…AAKI), 174 to 194 (ALLN…VSAG), 205 to 225 (GLAI…AYLA), 245 to 265 (LAVI…FNAP), 268 to 288 (AIFM…TVAV), 294 to 314 (IVMV…IIQV), and 343 to 363 (QVVI…LATL).

It belongs to the glycosyltransferase 4 family. MraY subfamily. It depends on Mg(2+) as a cofactor.

It localises to the cell inner membrane. The enzyme catalyses UDP-N-acetyl-alpha-D-muramoyl-L-alanyl-gamma-D-glutamyl-meso-2,6-diaminopimeloyl-D-alanyl-D-alanine + di-trans,octa-cis-undecaprenyl phosphate = di-trans,octa-cis-undecaprenyl diphospho-N-acetyl-alpha-D-muramoyl-L-alanyl-D-glutamyl-meso-2,6-diaminopimeloyl-D-alanyl-D-alanine + UMP. It functions in the pathway cell wall biogenesis; peptidoglycan biosynthesis. In terms of biological role, catalyzes the initial step of the lipid cycle reactions in the biosynthesis of the cell wall peptidoglycan: transfers peptidoglycan precursor phospho-MurNAc-pentapeptide from UDP-MurNAc-pentapeptide onto the lipid carrier undecaprenyl phosphate, yielding undecaprenyl-pyrophosphoryl-MurNAc-pentapeptide, known as lipid I. The sequence is that of Phospho-N-acetylmuramoyl-pentapeptide-transferase from Allorhizobium ampelinum (strain ATCC BAA-846 / DSM 112012 / S4) (Agrobacterium vitis (strain S4)).